Here is a 164-residue protein sequence, read N- to C-terminus: Superoxide dismutase [Cu-Zn] 3 (164 aa).

Residues histidine 51, histidine 53, and histidine 68 each contribute to the Cu cation site. An intrachain disulfide couples cysteine 62 to cysteine 151. Histidine 68, histidine 76, histidine 85, and aspartate 88 together coordinate Zn(2+). Cu cation is bound at residue histidine 125. Positions 162–164 (AKL) match the Peroxisome localization signal motif.

The protein belongs to the Cu-Zn superoxide dismutase family. In terms of assembly, homodimer. Cu cation serves as cofactor. Requires Zn(2+) as cofactor. In terms of tissue distribution, expressed in leaves (at protein level).

It is found in the peroxisome. The catalysed reaction is 2 superoxide + 2 H(+) = H2O2 + O2. In terms of biological role, destroys radicals which are normally produced within the cells and which are toxic to biological systems. This is Superoxide dismutase [Cu-Zn] 3 (CSD3) from Arabidopsis thaliana (Mouse-ear cress).